The following is a 205-amino-acid chain: Holliday junction branch migration complex subunit RuvA (205 aa).

The segment at 1–64 (MIGRLKGILI…ENLHQLFGFA (64 aa)) is domain I. A domain II region spans residues 65 to 143 (EQRDRSLFRT…NWDLPQGDML (79 aa)). A flexible linker region spans residues 144 to 153 (AHGEIQAIAS). The domain III stretch occupies residues 153–205 (SDNDIYAEAESALIALGYKPVDAAKMVASAAKQKPEARSEELIRIALRSLAGV).

The protein belongs to the RuvA family. In terms of assembly, homotetramer. Forms an RuvA(8)-RuvB(12)-Holliday junction (HJ) complex. HJ DNA is sandwiched between 2 RuvA tetramers; dsDNA enters through RuvA and exits via RuvB. An RuvB hexamer assembles on each DNA strand where it exits the tetramer. Each RuvB hexamer is contacted by two RuvA subunits (via domain III) on 2 adjacent RuvB subunits; this complex drives branch migration. In the full resolvosome a probable DNA-RuvA(4)-RuvB(12)-RuvC(2) complex forms which resolves the HJ.

The protein resides in the cytoplasm. The RuvA-RuvB-RuvC complex processes Holliday junction (HJ) DNA during genetic recombination and DNA repair, while the RuvA-RuvB complex plays an important role in the rescue of blocked DNA replication forks via replication fork reversal (RFR). RuvA specifically binds to HJ cruciform DNA, conferring on it an open structure. The RuvB hexamer acts as an ATP-dependent pump, pulling dsDNA into and through the RuvAB complex. HJ branch migration allows RuvC to scan DNA until it finds its consensus sequence, where it cleaves and resolves the cruciform DNA. This chain is Holliday junction branch migration complex subunit RuvA, found in Cellvibrio japonicus (strain Ueda107) (Pseudomonas fluorescens subsp. cellulosa).